We begin with the raw amino-acid sequence, 888 residues long: Bifunctional uridylyltransferase/uridylyl-removing enzyme (888 aa).

Residues 1–348 (MATTTDKQVS…YHFAEDKIEP (348 aa)) are uridylyltransferase. The segment at 349–709 (INPRFRIINN…LQPTTSRGAT (361 aa)) is uridylyl-removing. One can recognise an HD domain in the interval 468–590 (VDEHTILVIR…VGTQQRLDYL (123 aa)). ACT domains follow at residues 710-787 (ELII…DDTM) and 817-888 (ELSI…NIEQ).

Belongs to the GlnD family. Requires Mg(2+) as cofactor.

It carries out the reaction [protein-PII]-L-tyrosine + UTP = [protein-PII]-uridylyl-L-tyrosine + diphosphate. The enzyme catalyses [protein-PII]-uridylyl-L-tyrosine + H2O = [protein-PII]-L-tyrosine + UMP + H(+). Uridylyltransferase (UTase) activity is inhibited by glutamine, while glutamine activates uridylyl-removing (UR) activity. Its function is as follows. Modifies, by uridylylation and deuridylylation, the PII regulatory proteins (GlnB and homologs), in response to the nitrogen status of the cell that GlnD senses through the glutamine level. Under low glutamine levels, catalyzes the conversion of the PII proteins and UTP to PII-UMP and PPi, while under higher glutamine levels, GlnD hydrolyzes PII-UMP to PII and UMP (deuridylylation). Thus, controls uridylylation state and activity of the PII proteins, and plays an important role in the regulation of nitrogen assimilation and metabolism. The chain is Bifunctional uridylyltransferase/uridylyl-removing enzyme from Hydrogenovibrio crunogenus (strain DSM 25203 / XCL-2) (Thiomicrospira crunogena).